The sequence spans 881 residues: Sodium/potassium/calcium exchanger Nckx30C (881 aa).

Residues M1 to R194 are Extracellular-facing. N69 carries N-linked (GlcNAc...) asparagine glycosylation. Disordered regions lie at residues D79–D111, A149–P181, A215–E255, and G272–T315. A compositionally biased stretch (polar residues) spans R85–F95. A compositionally biased stretch (low complexity) spans A149–A175. A helical membrane pass occupies residues L195–A215. The Cytoplasmic segment spans residues A216–N330. Residues S228 to N240 are compositionally biased toward low complexity. Over residues A296 to T315 the composition is skewed to polar residues. Residues G331 to C351 traverse the membrane as a helical segment. Over D352–A375 the chain is Extracellular. Residues V372–F412 form an Alpha-1 repeat. Residues T376 to V396 traverse the membrane as a helical segment. The Cytoplasmic portion of the chain corresponds to S397–G402. Residues I403–L423 form a helical membrane-spanning segment. Residues F424–W433 lie on the Extracellular side of the membrane. The helical transmembrane segment at W434–F454 threads the bilayer. Residues R455–R458 are Cytoplasmic-facing. Residues I459 to K479 form a helical membrane-spanning segment. Topologically, residues W480–R720 are extracellular. Residues P508–G565 are disordered. A compositionally biased stretch (polar residues) spans A512–R537. N514 and N551 each carry an N-linked (GlcNAc...) asparagine glycan. Positions G542–N551 are enriched in low complexity. A helical membrane pass occupies residues F721–V741. The Cytoplasmic segment spans residues W742–E756. A helical membrane pass occupies residues V757–I777. The Alpha-2 repeat unit spans residues A764 to N795. Residues V778–N795 are Extracellular-facing. Residues I796 to A816 traverse the membrane as a helical segment. At P817–S822 the chain is on the cytoplasmic side. The chain crosses the membrane as a helical span at residues V823–I843. Residues A844 to K852 are Extracellular-facing. Residues G853–E873 form a helical membrane-spanning segment. Residues Y874–F881 are Cytoplasmic-facing.

Belongs to the Ca(2+):cation antiporter (CaCA) (TC 2.A.19) family. SLC24A subfamily. In terms of tissue distribution, expressed in the adult nervous system. Expressed in the photoreceptor cells as well as in the lamina, medulla, and optic lobes of the brain.

It localises to the membrane. May function in the removal and maintenance of calcium homeostasis during signaling in the adult and in signaling events during embryogenesis and patterning of imaginal disks. Transports one Ca(2+) and 1 K(+) in exchange for 4 Na(+). This Drosophila melanogaster (Fruit fly) protein is Sodium/potassium/calcium exchanger Nckx30C (Nckx30C).